The chain runs to 311 residues: Formimidoylglutamase (311 aa).

Mn(2+) contacts are provided by His122, Asp151, His153, Asp155, Cys242, and Asp244.

It belongs to the arginase family. Mn(2+) is required as a cofactor.

It carries out the reaction N-formimidoyl-L-glutamate + H2O = formamide + L-glutamate. Its pathway is amino-acid degradation; L-histidine degradation into L-glutamate; L-glutamate from N-formimidoyl-L-glutamate (hydrolase route): step 1/1. Functionally, catalyzes the conversion of N-formimidoyl-L-glutamate to L-glutamate and formamide. This chain is Formimidoylglutamase, found in Pseudomonas paraeruginosa (strain DSM 24068 / PA7) (Pseudomonas aeruginosa (strain PA7)).